A 197-amino-acid chain; its full sequence is Histone chaperone asf1b-B (197 aa).

The protein belongs to the ASF1 family. In terms of assembly, interacts with histone H3 and histone H4.

Its subcellular location is the nucleus. Histone chaperone that facilitates histone deposition and histone exchange and removal during nucleosome assembly and disassembly. The protein is Histone chaperone asf1b-B (asf1bb) of Danio rerio (Zebrafish).